The sequence spans 275 residues: Lectin 8 (275 aa).

Positions 1–31 are cleaved as a signal peptide; it reads MANSNPKLLVTQNPFSVFLLTFLLLITNVKS. Asn-55 and Asn-150 each carry an N-linked (GlcNAc...) asparagine glycan.

Belongs to the leguminous lectin family.

May be involved in arbuscular mycorrhizal (AM) symbiosis with AM fungi. This chain is Lectin 8, found in Medicago truncatula (Barrel medic).